A 201-amino-acid chain; its full sequence is Putative 3-methyladenine DNA glycosylase (201 aa).

It belongs to the DNA glycosylase MPG family.

The polypeptide is Putative 3-methyladenine DNA glycosylase (Clostridium novyi (strain NT)).